Reading from the N-terminus, the 150-residue chain is uncharacterized protein (150 aa).

It belongs to the aspartate/glutamate racemases family.

This is an uncharacterized protein from Pectobacterium carotovorum subsp. carotovorum (Erwinia carotovora subsp. carotovora).